Reading from the N-terminus, the 636-residue chain is MAKIVQLPDDLSNKIAAGEVVERPASVVKELVENAIDANSSVIEIDVEEAGLASIKVLDDGEGMDAEDCRTAFLRHATSKIKDENDLFRVRTLGFRGEALPSIASVSHLSIKTSTGEGAGTHLTLQGGRIISEQKAPSRRGTEITVTNLFFNTPARLKYMKTIHTELGNITDVVNRIALAHPEVSIRLRHQGKTLLQTNGNGDVRHVLAAIYGTAVAKKMLPLEARSLDFEVKGYIALPEITRASRNYMSSVVNGRYIKNFPLVKAIHEGYHTLLPIGRHPITFIEINMDPLLVDVNVHPSKLEVRLSKETELHELIRDAIKDVFKQQQLIPSVQVPKKTAPLINKPEQQKLDFDQVREPAPLSDSDVEREYKPEPSFSAMKLSSLVKDPPPSAPVEREENVMQDTEPEWPGAEEYTPEAAPAVQAEPEQAGENVQDEETPKERVPIMYPIGQMHGTYILAQNENGLYIIDQHAAQERIKYEYFREKVGEVESEVQDLLVPLTFHYSKNEALTIDQHLDDLAKVGVFLESFGAGSYIVRCHPTWFPKGEETTIIEDIIQQVLDDRTIDIKKLREEAAIMMSCKGSIKANHHLRDDEITALLDELRRTSDPFTCPHGRPIIIHYSTYEMEKMFKRVM.

The disordered stretch occupies residues alanine 341–alanine 420. A compositionally biased stretch (basic and acidic residues) spans glutamate 348–arginine 358.

This sequence belongs to the DNA mismatch repair MutL/HexB family.

Functionally, this protein is involved in the repair of mismatches in DNA. It is required for dam-dependent methyl-directed DNA mismatch repair. May act as a 'molecular matchmaker', a protein that promotes the formation of a stable complex between two or more DNA-binding proteins in an ATP-dependent manner without itself being part of a final effector complex. The sequence is that of DNA mismatch repair protein MutL from Bacillus licheniformis (strain ATCC 14580 / DSM 13 / JCM 2505 / CCUG 7422 / NBRC 12200 / NCIMB 9375 / NCTC 10341 / NRRL NRS-1264 / Gibson 46).